The following is a 331-amino-acid chain: RNA 3'-terminal phosphate cyclase (331 aa).

ATP-binding positions include Gln100 and 276 to 280 (HLADQ). Catalysis depends on His301, which acts as the Tele-AMP-histidine intermediate.

Belongs to the RNA 3'-terminal cyclase family. Type 1 subfamily.

It localises to the cytoplasm. It catalyses the reaction a 3'-end 3'-phospho-ribonucleotide-RNA + ATP = a 3'-end 2',3'-cyclophospho-ribonucleotide-RNA + AMP + diphosphate. Catalyzes the conversion of 3'-phosphate to a 2',3'-cyclic phosphodiester at the end of RNA. The mechanism of action of the enzyme occurs in 3 steps: (A) adenylation of the enzyme by ATP; (B) transfer of adenylate to an RNA-N3'P to produce RNA-N3'PP5'A; (C) and attack of the adjacent 2'-hydroxyl on the 3'-phosphorus in the diester linkage to produce the cyclic end product. The biological role of this enzyme is unknown but it is likely to function in some aspects of cellular RNA processing. The protein is RNA 3'-terminal phosphate cyclase of Methanosarcina barkeri (strain Fusaro / DSM 804).